Reading from the N-terminus, the 445-residue chain is tRNA-2-methylthio-N(6)-dimethylallyladenosine synthase (445 aa).

The region spanning lysine 2 to glutamate 122 is the MTTase N-terminal domain. Residues cysteine 11, cysteine 47, cysteine 85, cysteine 157, cysteine 161, and cysteine 164 each contribute to the [4Fe-4S] cluster site. The 236-residue stretch at arginine 143–arginine 378 folds into the Radical SAM core domain. Positions arginine 378–serine 440 constitute a TRAM domain.

It belongs to the methylthiotransferase family. MiaB subfamily. In terms of assembly, monomer. [4Fe-4S] cluster serves as cofactor.

The protein resides in the cytoplasm. It catalyses the reaction N(6)-dimethylallyladenosine(37) in tRNA + (sulfur carrier)-SH + AH2 + 2 S-adenosyl-L-methionine = 2-methylsulfanyl-N(6)-dimethylallyladenosine(37) in tRNA + (sulfur carrier)-H + 5'-deoxyadenosine + L-methionine + A + S-adenosyl-L-homocysteine + 2 H(+). Catalyzes the methylthiolation of N6-(dimethylallyl)adenosine (i(6)A), leading to the formation of 2-methylthio-N6-(dimethylallyl)adenosine (ms(2)i(6)A) at position 37 in tRNAs that read codons beginning with uridine. In Methylobacterium radiotolerans (strain ATCC 27329 / DSM 1819 / JCM 2831 / NBRC 15690 / NCIMB 10815 / 0-1), this protein is tRNA-2-methylthio-N(6)-dimethylallyladenosine synthase.